Reading from the N-terminus, the 503-residue chain is Cytochrome P450 714C1 (503 aa).

At Met1–Ala6 the chain is on the lumenal side. A helical; Signal-anchor for type III membrane protein membrane pass occupies residues Leu7–Trp27. Over Leu28 to Pro503 the chain is Cytoplasmic. Cys450 contacts heme.

Belongs to the cytochrome P450 family. Requires heme as cofactor.

It is found in the membrane. In terms of biological role, probably not involved in gibberellin metabolism since over-expression of CYP714C1 in a heterologous system does not induce semi-dwarfism. The protein is Cytochrome P450 714C1 (CYP714C1) of Oryza sativa subsp. japonica (Rice).